A 303-amino-acid chain; its full sequence is Ribosomal RNA small subunit methyltransferase A (303 aa).

Residues 1–19 show a composition bias toward low complexity; sequence MSSRPPASFSATFSAARSS. The tract at residues 1 to 34 is disordered; it reads MSSRPPASFSATFSAARSSKCVPPPRRPSTDVSL. Residues H55, L57, G82, E104, D130, and N149 each contribute to the S-adenosyl-L-methionine site.

The protein belongs to the class I-like SAM-binding methyltransferase superfamily. rRNA adenine N(6)-methyltransferase family. RsmA subfamily.

The protein resides in the cytoplasm. It carries out the reaction adenosine(1518)/adenosine(1519) in 16S rRNA + 4 S-adenosyl-L-methionine = N(6)-dimethyladenosine(1518)/N(6)-dimethyladenosine(1519) in 16S rRNA + 4 S-adenosyl-L-homocysteine + 4 H(+). In terms of biological role, specifically dimethylates two adjacent adenosines (A1518 and A1519) in the loop of a conserved hairpin near the 3'-end of 16S rRNA in the 30S particle. May play a critical role in biogenesis of 30S subunits. The protein is Ribosomal RNA small subunit methyltransferase A of Gluconobacter oxydans (strain 621H) (Gluconobacter suboxydans).